Reading from the N-terminus, the 156-residue chain is Small ribosomal subunit protein uS7 (156 aa).

It belongs to the universal ribosomal protein uS7 family. Part of the 30S ribosomal subunit. Contacts proteins S9 and S11.

In terms of biological role, one of the primary rRNA binding proteins, it binds directly to 16S rRNA where it nucleates assembly of the head domain of the 30S subunit. Is located at the subunit interface close to the decoding center, probably blocks exit of the E-site tRNA. This chain is Small ribosomal subunit protein uS7, found in Streptococcus pyogenes serotype M3 (strain ATCC BAA-595 / MGAS315).